A 426-amino-acid polypeptide reads, in one-letter code: Serine--tRNA ligase (426 aa).

233–235 lines the L-serine pocket; the sequence is TSE. An ATP-binding site is contributed by 264 to 266; that stretch reads RSE. Glu-287 contributes to the L-serine binding site. 351 to 354 serves as a coordination point for ATP; sequence EISS. Ser-387 is an L-serine binding site.

This sequence belongs to the class-II aminoacyl-tRNA synthetase family. Type-1 seryl-tRNA synthetase subfamily. Homodimer. The tRNA molecule binds across the dimer.

The protein localises to the cytoplasm. It carries out the reaction tRNA(Ser) + L-serine + ATP = L-seryl-tRNA(Ser) + AMP + diphosphate + H(+). The enzyme catalyses tRNA(Sec) + L-serine + ATP = L-seryl-tRNA(Sec) + AMP + diphosphate + H(+). It functions in the pathway aminoacyl-tRNA biosynthesis; selenocysteinyl-tRNA(Sec) biosynthesis; L-seryl-tRNA(Sec) from L-serine and tRNA(Sec): step 1/1. Its function is as follows. Catalyzes the attachment of serine to tRNA(Ser). Is also able to aminoacylate tRNA(Sec) with serine, to form the misacylated tRNA L-seryl-tRNA(Sec), which will be further converted into selenocysteinyl-tRNA(Sec). In Xylella fastidiosa (strain M23), this protein is Serine--tRNA ligase.